The chain runs to 122 residues: Large ribosomal subunit protein bL12 (122 aa).

Belongs to the bacterial ribosomal protein bL12 family. In terms of assembly, homodimer. Part of the ribosomal stalk of the 50S ribosomal subunit. Forms a multimeric L10(L12)X complex, where L10 forms an elongated spine to which 2 to 4 L12 dimers bind in a sequential fashion. Binds GTP-bound translation factors.

Forms part of the ribosomal stalk which helps the ribosome interact with GTP-bound translation factors. Is thus essential for accurate translation. This chain is Large ribosomal subunit protein bL12, found in Mesoplasma florum (strain ATCC 33453 / NBRC 100688 / NCTC 11704 / L1) (Acholeplasma florum).